Here is a 466-residue protein sequence, read N- to C-terminus: Cocosin 1 (466 aa).

A signal peptide spans 1–22; that stretch reads MGSSSLLSFSLCLLLLCHLSQA. Intrachain disulfides connect Cys-45–Cys-78 and Cys-121–Cys-288. Cupin type-1 domains follow at residues 50 to 242 and 294 to 443; these read LNAL…ELAR and QNIG…DEAR.

It belongs to the 11S seed storage protein (globulins) family. In terms of assembly, hexamer; each subunit is composed of an acidic and a basic chain derived from a single precursor and linked by a disulfide bond. Endosperm of the seeds.

Seed storage protein. This chain is Cocosin 1, found in Cocos nucifera (Coconut palm).